Reading from the N-terminus, the 530-residue chain is Poly(U)-binding-splicing factor PUF60 (530 aa).

The tract at residues 1–487 is inhibits homodimerization; that stretch reads MATATIALGT…EDAEIIVKIF (487 aa). K14 is covalently cross-linked (Glycyl lysine isopeptide (Lys-Gly) (interchain with G-Cter in SUMO2)). Residue T31 is modified to Phosphothreonine. Residues 48–530 form an inhibits transcriptional repression, interaction with ERCC3 and apoptosis induction region; it reads QSIKSVLVKQ…ERFDNSDLSA (483 aa). K51 participates in a covalent cross-link: Glycyl lysine isopeptide (Lys-Gly) (interchain with G-Cter in SUMO2). A Phosphoserine modification is found at S83. 2 consecutive RRM domains span residues 100–178 and 197–275; these read CRVY…RPSN and NRIY…KAVT. Residue S215 is modified to Phosphoserine. K222 bears the N6-acetyllysine mark. T285 is subject to Phosphothreonine. Residues 387–408 are disordered; it reads KKEKEEEELFPESERPEMLSEQ. A Glycyl lysine isopeptide (Lys-Gly) (interchain with G-Cter in SUMO2) cross-link involves residue K390. Basic and acidic residues predominate over residues 398-408; that stretch reads ESERPEMLSEQ. N6-acetyllysine is present on K425. Residue K429 forms a Glycyl lysine isopeptide (Lys-Gly) (interchain with G-Cter in SUMO2) linkage. The region spanning 433–520 is the RRM 3; atypical domain; sequence TVMVLRNMVD…RKVVAEVYDQ (88 aa).

This sequence belongs to the RRM half pint family. Homodimer. Associates with the spliceosome. Found in a complex with RO60 and Y5 RNA. Found in a complex with FUBP1 and far upstream element (FUSE) DNA segment. Interacts directly with ERCC3. Interacts with CDK7 and GTF2H1. Interacts with SRSF11/P54. Interacts with ARGLU1; interaction may be involved in ARGLU1-mediated modulation of alternative splicing.

Its subcellular location is the nucleus. Its function is as follows. DNA- and RNA-binding protein, involved in several nuclear processes such as pre-mRNA splicing, apoptosis and transcription regulation. In association with FUBP1 regulates MYC transcription at the P2 promoter through the core-TFIIH basal transcription factor. Acts as a transcriptional repressor through the core-TFIIH basal transcription factor. Represses FUBP1-induced transcriptional activation but not basal transcription. Decreases ERCC3 helicase activity. Is also involved in pre-mRNA splicing. Promotes splicing of an intron with weak 3'-splice site and pyrimidine tract in a cooperative manner with U2AF2. Involved in apoptosis induction when overexpressed in HeLa cells. Modulates alternative splicing of several mRNAs. Binds to relaxed DNA of active promoter regions. Binds to the pyrimidine tract and 3'-splice site regions of pre-mRNA; binding is enhanced in presence of U2AF2. Binds to Y5 RNA in association with RO60. Binds to poly(U) RNA. This is Poly(U)-binding-splicing factor PUF60 from Bos taurus (Bovine).